The primary structure comprises 717 residues: Patatin-like phospholipase domain-containing protein AO090003000839 (717 aa).

The chain crosses the membrane as a helical span at residues 87–107; that stretch reads WPFLFIVFGWITVLGFAYALT. The region spanning 277-468 is the PNPLA domain; it reads LCLSGGATFA…RTDIPIRALN (192 aa). Residues 308 to 312 carry the GXSXG motif; it reads GTSGG. Residue serine 310 is the Nucleophile of the active site. Aspartate 455 acts as the Proton acceptor in catalysis. The tract at residues 620–696 is disordered; the sequence is VSPAQSRRKR…STGNIFQEMR (77 aa). Residues 639-658 show a composition bias toward basic and acidic residues; that stretch reads MVERLDHNLPDRQPDNKEDL. Residues 660–673 show a composition bias toward low complexity; that stretch reads DSSGIDSNVSSRDS.

The protein belongs to the PLPL family.

The protein localises to the membrane. Probable lipid hydrolase. The sequence is that of Patatin-like phospholipase domain-containing protein AO090003000839 from Aspergillus oryzae (strain ATCC 42149 / RIB 40) (Yellow koji mold).